Here is a 267-residue protein sequence, read N- to C-terminus: Glucosamine-6-phosphate deaminase (267 aa).

The active-site Proton acceptor; for enolization step is the Asp72. Asp141 functions as the For ring-opening step in the catalytic mechanism. Residue His143 is the Proton acceptor; for ring-opening step of the active site. Glu148 acts as the For ring-opening step in catalysis.

The protein belongs to the glucosamine/galactosamine-6-phosphate isomerase family. NagB subfamily. As to quaternary structure, homohexamer.

The enzyme catalyses alpha-D-glucosamine 6-phosphate + H2O = beta-D-fructose 6-phosphate + NH4(+). The protein operates within amino-sugar metabolism; N-acetylneuraminate degradation; D-fructose 6-phosphate from N-acetylneuraminate: step 5/5. Allosterically activated by N-acetylglucosamine 6-phosphate (GlcNAc6P). Catalyzes the reversible isomerization-deamination of glucosamine 6-phosphate (GlcN6P) to form fructose 6-phosphate (Fru6P) and ammonium ion. The chain is Glucosamine-6-phosphate deaminase from Actinobacillus pleuropneumoniae serotype 3 (strain JL03).